The primary structure comprises 192 residues: Leucine-rich repeat-containing protein 51 (192 aa).

3 LRR repeats span residues 49-71 (SLTQSLWLNNNVLNDLRDFNQVA), 80-101 (NLAWIDLSFNDLTSIDPVLTTF), and 103-124 (NLSVLYLHGNSIQRLGEVNKLA). Residues 137 to 175 (NPMEEEKGYRQYVLCTLSRITTFDFAGVTKADRTTAEVW) form the LRRCT domain.

The protein resides in the cytoplasm. This chain is Leucine-rich repeat-containing protein 51, found in Pan troglodytes (Chimpanzee).